A 119-amino-acid polypeptide reads, in one-letter code: U-scoloptoxin(01)-Er1a (119 aa).

Positions 1 to 22 are cleaved as a signal peptide; the sequence is MEIHSNIILLLLIALFAIFVKM. The 59-residue stretch at 39–97 folds into the Chitin-binding type-2 domain; that stretch reads NFACSGKKPGFYADEGFDCQVYHMCSPEGQLTTYLCGPGTIFNQKKLVCDLPTNYNCAD. Residues Cys74 and Cys87 are joined by a disulfide bond.

It belongs to the scoloptoxin-01 family. Post-translationally, contains 3 disulfide bonds. As to expression, expressed by the venom gland.

Its subcellular location is the secreted. The chain is U-scoloptoxin(01)-Er1a from Ethmostigmus rubripes (Giant centipede).